The primary structure comprises 289 residues: Probable ABC transporter permease protein BruAb2_0483 (289 aa).

Transmembrane regions (helical) follow at residues 9–29 (FLIL…VVHL), 70–90 (VWTV…AIIL), 99–119 (VARV…AIFW), 144–166 (IQWL…LVTV), 213–233 (IAIV…WVMT), and 258–278 (FGEA…FTVI). Residues 65–279 (LWRTAVWTVA…AILLVFTVIY (215 aa)) form the ABC transmembrane type-1 domain.

This sequence belongs to the binding-protein-dependent transport system permease family. In terms of assembly, the complex is composed of two ATP-binding proteins (BruAb2_0487), two transmembrane proteins (BruAb2_0483) and a solute-binding protein (BruAb2_0484).

Its subcellular location is the cell inner membrane. Functionally, probably part of an ABC transporter complex. Probably responsible for the translocation of the substrate across the membrane. The chain is Probable ABC transporter permease protein BruAb2_0483 from Brucella abortus biovar 1 (strain 9-941).